The sequence spans 504 residues: Dihydrolipoamide dehydrogenase (504 aa).

A mitochondrion-targeting transit peptide spans 1 to 34 (MLSQRLIGRTAVKSAFRPSGLPTVVNASRWRRGY). Residues 69–78 (EKRGTLGGTC), K87, G151, and 180–182 (TGS) each bind FAD. Cysteines 78 and 83 form a disulfide. Residues 217-224 (GGGIIGLE), E240, V275, and G310 each bind NAD(+). Residues D351 and 357–360 (MLAH) each bind FAD. H483 (proton acceptor) is an active-site residue.

The protein belongs to the class-I pyridine nucleotide-disulfide oxidoreductase family. In terms of assembly, eukaryotic pyruvate dehydrogenase (PDH) complexes are organized as a core consisting of the oligomeric dihydrolipoamide acetyl-transferase (E2), around which are arranged multiple copies of pyruvate dehydrogenase (E1), dihydrolipoamide dehydrogenase (E3) and protein X (E3BP) bound by non-covalent bonds. The Chaetomium thermophilum PDH complex contains 60 E2 units, 12 E3BP units, about 20 E1 units, and 12 or more E3 units. The units are organized in 1 E2 60-mer, 4 E3BP trimers, about 20 E1 tetramers, and a maximum of 12 E3 dimers. The E3BP trimers are bound inside the icosahedral core with tetrahedral symmetry. FAD is required as a cofactor.

Its subcellular location is the mitochondrion. The enzyme catalyses N(6)-[(R)-dihydrolipoyl]-L-lysyl-[protein] + NAD(+) = N(6)-[(R)-lipoyl]-L-lysyl-[protein] + NADH + H(+). Its function is as follows. Lipoamide dehydrogenase is a component of the alpha-ketoacid dehydrogenase complexes. This includes the pyruvate dehydrogenase complex, which catalyzes the overall conversion of pyruvate to acetyl-CoA and CO(2). Also acts as a component of the glycine cleavage system (glycine decarboxylase complex), which catalyzes the degradation of glycine. The 10-megadalton pyruvate dehydrogenase complex contains multiple copies of three enzymatic components: pyruvate dehydrogenase (E1), dihydrolipoamide acetyltransferase (E2) and lipoamide dehydrogenase (E3) and catalyzes the overall oxidative decarboxylation of pyruvate to form acetyl-CoA and CO(2). Within the complex, pyruvate and thiamine pyrophosphate (TPP or vitamin B1) are bound by pyruvate dehydrogenase E1 subunits alpha and beta and pyruvate is decarboxylated leading to the 2-carbon hydrohyethyl bound to TPP. The E2 component contains covalently-bound lipoyl cofactors and transfers the hydroxyethyl group from TPP to an oxidized form of covalently bound lipoamide, and the resulting acetyl group is then transferred to free coenzyme A to form acetyl-CoA and reduced dihydrolipoamide-E2. Finally, the flavoprotein dihydrolipoamide dehydrogenase (E3) re-oxidizes the lipoyl group of dihydrolipoamide-E2 to form lipoamide-E2 and NADH. A fourth subunit, E3BP, is responsible for tethering E3 in proximity to the core, forming the entire metabolon. The polypeptide is Dihydrolipoamide dehydrogenase (Chaetomium thermophilum (strain DSM 1495 / CBS 144.50 / IMI 039719) (Thermochaetoides thermophila)).